A 217-amino-acid polypeptide reads, in one-letter code: Ribonuclease T (217 aa).

The Exonuclease domain occupies 20–194 (VVIDIETAGF…YDTQQTANLF (175 aa)). Mg(2+) contacts are provided by aspartate 23, glutamate 25, histidine 181, and aspartate 186. The active-site Proton donor/acceptor is the histidine 181.

Belongs to the RNase T family. As to quaternary structure, homodimer. It depends on Mg(2+) as a cofactor.

In terms of biological role, trims short 3' overhangs of a variety of RNA species, leaving a one or two nucleotide 3' overhang. Responsible for the end-turnover of tRNA: specifically removes the terminal AMP residue from uncharged tRNA (tRNA-C-C-A). Also appears to be involved in tRNA biosynthesis. This Buchnera aphidicola subsp. Baizongia pistaciae (strain Bp) protein is Ribonuclease T.